Here is a 344-residue protein sequence, read N- to C-terminus: Uroporphyrinogen decarboxylase (344 aa).

Substrate contacts are provided by residues arginine 29–arginine 33, aspartate 79, tyrosine 153, serine 208, and histidine 324.

It belongs to the uroporphyrinogen decarboxylase family. As to quaternary structure, homodimer.

It is found in the cytoplasm. The enzyme catalyses uroporphyrinogen III + 4 H(+) = coproporphyrinogen III + 4 CO2. Its pathway is porphyrin-containing compound metabolism; protoporphyrin-IX biosynthesis; coproporphyrinogen-III from 5-aminolevulinate: step 4/4. In terms of biological role, catalyzes the decarboxylation of four acetate groups of uroporphyrinogen-III to yield coproporphyrinogen-III. In Rhizorhabdus wittichii (strain DSM 6014 / CCUG 31198 / JCM 15750 / NBRC 105917 / EY 4224 / RW1) (Sphingomonas wittichii), this protein is Uroporphyrinogen decarboxylase.